Consider the following 139-residue polypeptide: Putative translationally-controlled tumor protein-like protein TPT1P8 (139 aa).

The region spanning 1 to 139 (MIIFQDLISH…KTTSSLLVKT (139 aa)) is the TCTP domain. Over residues 40–51 (TGNTDDSLIGRN) the composition is skewed to polar residues. Positions 40–60 (TGNTDDSLIGRNSSSESTEDE) are disordered.

It belongs to the TCTP family.

This Homo sapiens (Human) protein is Putative translationally-controlled tumor protein-like protein TPT1P8 (TPT1P8).